Here is a 531-residue protein sequence, read N- to C-terminus: Probable mitochondrial-processing peptidase subunit beta, mitochondrial (531 aa).

Residues 1-78 (MAMKNLLSLA…ENPDKRFLKY (78 aa)) constitute a mitochondrion transit peptide. The tract at residues 30-50 (SAIDSVPASASPTALSPPPPH) is disordered. His-141 provides a ligand contact to Zn(2+). The active-site Proton acceptor is the Glu-144. His-145 contributes to the Zn(2+) binding site. Residue Glu-214 is part of the active site. Zn(2+) is bound at residue Glu-221.

This sequence belongs to the peptidase M16 family. Heterodimer of an alpha subunit and a beta subunit subunits, forming the mitochondrial processing protease (MPP) in which the alpha subunit is involved in substrate recognition and binding and the beta subunit is the catalytic subunit. Component of the ubiquinol-cytochrome c oxidoreductase (cytochrome b-c1 complex, complex III, CIII), a multisubunit enzyme composed of 10 subunits. The complex is composed of 3 respiratory subunits cytochrome b (MT-CYB), cytochrome c1 (CYC1-1 or CYC1-2) and Rieske protein (UCR1-1 or UCR1-2), 2 core protein subunits MPPalpha1 (or MPPalpha2) and MPPB, and 5 low-molecular weight protein subunits QCR7-1 (or QCR7-2), UCRQ-1 (or UCRQ-2), QCR9, UCRY and probably QCR6-1 (or QCR6-2). The complex exists as an obligatory dimer and forms supercomplexes (SCs) in the inner mitochondrial membrane with NADH-ubiquinone oxidoreductase (complex I, CI), resulting in different assemblies (supercomplexes SCI(1)III(2) and SCI(2)III(4)). Zn(2+) is required as a cofactor.

It is found in the mitochondrion. Its subcellular location is the mitochondrion inner membrane. It carries out the reaction Release of N-terminal transit peptides from precursor proteins imported into the mitochondrion, typically with Arg in position P2.. With respect to regulation, binding to the alpha subunit is required for catalytic activity. Functionally, catalytic subunit of the essential mitochondrial processing protease (MPP), which cleaves the mitochondrial sequence off newly imported precursors proteins. Preferentially, cleaves after an arginine at position P2. Component of the ubiquinol-cytochrome c oxidoreductase, a multisubunit transmembrane complex that is part of the mitochondrial electron transport chain which drives oxidative phosphorylation. The respiratory chain contains 3 multisubunit complexes succinate dehydrogenase (complex II, CII), ubiquinol-cytochrome c oxidoreductase (cytochrome b-c1 complex, complex III, CIII) and cytochrome c oxidase (complex IV, CIV), that cooperate to transfer electrons derived from NADH and succinate to molecular oxygen, creating an electrochemical gradient over the inner membrane that drives transmembrane transport and the ATP synthase. The cytochrome b-c1 complex catalyzes electron transfer from ubiquinol to cytochrome c, linking this redox reaction to translocation of protons across the mitochondrial inner membrane, with protons being carried across the membrane as hydrogens on the quinol. In the process called Q cycle, 2 protons are consumed from the matrix, 4 protons are released into the intermembrane space and 2 electrons are passed to cytochrome c. This is Probable mitochondrial-processing peptidase subunit beta, mitochondrial (MPPbeta) from Arabidopsis thaliana (Mouse-ear cress).